Reading from the N-terminus, the 1445-residue chain is 3'-5' RNA helicase YTHDC2 (1445 aa).

The segment at methionine 1–glycine 50 is disordered. The segment covering serine 15–alanine 48 has biased composition (gly residues). In terms of domain architecture, R3H spans aspartate 53–aspartate 121. The region spanning valine 218–glutamine 384 is the Helicase ATP-binding domain. Glycine 231–threonine 238 contributes to the ATP binding site. The DEAH box motif lies at aspartate 331–histidine 334. ANK repeat units lie at residues threonine 521 to serine 553 and asparagine 554 to leucine 586. One can recognise a Helicase C-terminal domain in the interval leucine 627–alanine 799. Phosphoserine is present on residues serine 1104, serine 1105, and serine 1107. A compositionally biased stretch (polar residues) spans glutamate 1179 to glycine 1189. The disordered stretch occupies residues glutamate 1179–isoleucine 1303. Basic and acidic residues predominate over residues lysine 1246–aspartate 1264. Residues glutamine 1265–proline 1279 show a composition bias toward low complexity. Phosphoserine is present on residues serine 1278, serine 1282, and serine 1296. One can recognise a YTH domain in the interval isoleucine 1303–tryptophan 1433. RNA is bound by residues lysine 1309–serine 1311, tryptophan 1325, and tryptophan 1375.

The protein belongs to the DEAD box helicase family. DEAH subfamily. As to quaternary structure, interacts with MEIOC; binds transcripts that regulate the mitotic cell cycle inhibiting progression into metaphase, thereby allowing meiotic prophase to proceed normally. Interacts (via ANK repeats) with XRN1. Interacts with ZCCHC4. Associates with the small ribosomal subunit. Interacts with RBM46. Present in male and female germ cells (at protein level). Highly expressed in testis. Not detected in spermatogonia next to the tubule wall but is strongly expressed in spermatocytes, suggesting that it is up-regulated in germ cells upon entry into meiosis (at protein level).

Its subcellular location is the cytoplasm. The protein localises to the perinuclear region. It catalyses the reaction ATP + H2O = ADP + phosphate + H(+). In terms of biological role, 3'-5' RNA helicase that plays a key role in the male and female germline by promoting transition from mitotic to meiotic divisions in stem cells. Specifically recognizes and binds N6-methyladenosine (m6A)-containing RNAs, a modification present at internal sites of mRNAs and some non-coding RNAs that plays a role in the efficiency of RNA processing and stability. Essential for ensuring a successful progression of the meiotic program in the germline by regulating the level of m6A-containing RNAs. Acts by binding and promoting degradation of m6A-containing mRNAs: the 3'-5' RNA helicase activity is required for this process and RNA degradation may be mediated by XRN1 exoribonuclease. Required for both spermatogenesis and oogenesis. The protein is 3'-5' RNA helicase YTHDC2 of Mus musculus (Mouse).